The primary structure comprises 57 residues: Large ribosomal subunit protein bL32 (57 aa).

Belongs to the bacterial ribosomal protein bL32 family.

The polypeptide is Large ribosomal subunit protein bL32 (Geobacillus kaustophilus (strain HTA426)).